A 98-amino-acid chain; its full sequence is Large ribosomal subunit protein bL27 (98 aa).

The disordered stretch occupies residues 1-22; that stretch reads MAHKKGTGSTRNGRDSNAQRLG. A compositionally biased stretch (polar residues) spans 7–19; the sequence is TGSTRNGRDSNAQ.

Belongs to the bacterial ribosomal protein bL27 family.

This is Large ribosomal subunit protein bL27 from Nostoc punctiforme (strain ATCC 29133 / PCC 73102).